The sequence spans 410 residues: Multifunctional CCA protein (410 aa).

ATP contacts are provided by G8 and R11. Residues G8 and R11 each contribute to the CTP site. Positions 21 and 23 each coordinate Mg(2+). ATP is bound by residues R91, R137, and R140. Residues R91, R137, and R140 each contribute to the CTP site. An HD domain is found at 228-329; the sequence is TGVHVLSVLQ…LELLQSFDVY (102 aa).

The protein belongs to the tRNA nucleotidyltransferase/poly(A) polymerase family. Bacterial CCA-adding enzyme type 1 subfamily. In terms of assembly, monomer. Can also form homodimers and oligomers. Mg(2+) is required as a cofactor. Ni(2+) serves as cofactor.

It catalyses the reaction a tRNA precursor + 2 CTP + ATP = a tRNA with a 3' CCA end + 3 diphosphate. It carries out the reaction a tRNA with a 3' CCA end + 2 CTP + ATP = a tRNA with a 3' CCACCA end + 3 diphosphate. In terms of biological role, catalyzes the addition and repair of the essential 3'-terminal CCA sequence in tRNAs without using a nucleic acid template. Adds these three nucleotides in the order of C, C, and A to the tRNA nucleotide-73, using CTP and ATP as substrates and producing inorganic pyrophosphate. tRNA 3'-terminal CCA addition is required both for tRNA processing and repair. Also involved in tRNA surveillance by mediating tandem CCA addition to generate a CCACCA at the 3' terminus of unstable tRNAs. While stable tRNAs receive only 3'-terminal CCA, unstable tRNAs are marked with CCACCA and rapidly degraded. This chain is Multifunctional CCA protein, found in Pseudomonas paraeruginosa (strain DSM 24068 / PA7) (Pseudomonas aeruginosa (strain PA7)).